A 428-amino-acid chain; its full sequence is MQKFLELKPVSYINGTIYLPGSKSISNRVLLLSAMANGITCLTNLLDSQDTQYMLNALRKIGIKFFLSNNNTTCHVHGIGKAFHLSHPISLFLGNAGTAMRPLLAALSLYENNVVLSGDDRMHERPIAHLVDALKQGGATLEYKKGIGYPPVLTKGGFKGGSIMLDGSISSQFLTSLLMVAPLALQNTNIFIKGNLVSKPYIDITLNLMKSFGVNIVNDCYKSFYIKGNQKYESPGNYLVEGDASSASYFLAAAAIKGGSVKVVGVGKKSVQGDIKFADVLEKMGAIIDWGDSFIVCRHNKLEKIDLDMNHIPDAAMTIAIVALFAKGTSIIKNIYNWRVKETDRLSAMSKELKKVGAIIKEGRDCLSITPPNFFKFAEIDTYNDHRMAMCFSLICLSGISVRILNPNCISKTFPSYFENFLKISRFD.

Lys-23, Ser-24, and Arg-28 together coordinate 3-phosphoshikimate. Lys-23 lines the phosphoenolpyruvate pocket. The phosphoenolpyruvate site is built by Gly-97 and Arg-125. Ser-170, Ser-171, Gln-172, Ser-198, Asp-314, Asn-337, and Lys-341 together coordinate 3-phosphoshikimate. Gln-172 provides a ligand contact to phosphoenolpyruvate. Asp-314 serves as the catalytic Proton acceptor. Arg-345, Arg-387, and Lys-412 together coordinate phosphoenolpyruvate.

It belongs to the EPSP synthase family. As to quaternary structure, monomer.

It localises to the cytoplasm. The catalysed reaction is 3-phosphoshikimate + phosphoenolpyruvate = 5-O-(1-carboxyvinyl)-3-phosphoshikimate + phosphate. The protein operates within metabolic intermediate biosynthesis; chorismate biosynthesis; chorismate from D-erythrose 4-phosphate and phosphoenolpyruvate: step 6/7. In terms of biological role, catalyzes the transfer of the enolpyruvyl moiety of phosphoenolpyruvate (PEP) to the 5-hydroxyl of shikimate-3-phosphate (S3P) to produce enolpyruvyl shikimate-3-phosphate and inorganic phosphate. This Buchnera aphidicola subsp. Schizaphis graminum (strain Sg) protein is 3-phosphoshikimate 1-carboxyvinyltransferase.